The primary structure comprises 190 residues: COMM domain-containing protein 1 (190 aa).

A2 carries the N-acetylalanine modification. Residues 2–123 form a sufficient for interaction with SLC12A2 region; the sequence is AAGELEGGKP…RWNSGLRGLS (122 aa). Residues H101, M110, and H134 each coordinate Cu cation. A COMM domain is found at 118-186; sequence GLRGLSWRVD…EVEESISTLI (69 aa). The tract at residues 125–190 is required for binding to PtdIns(4,5)P2; sequence RVDGKSQSRH…SISTLISQPN (66 aa).

Belongs to the COMM domain-containing protein 1 family. In terms of assembly, component of the commander complex consisting of the CCC subcomplex and the retriever subcomplex. Component of the CCC (COMMD/CCDC22/CCDC93) subcomplex consisting of COMMD1, COMMD2, COMMD3, COMMD4, COMMD5, COMMD6, COMMD7, COMMD8, COMMD9, COMMD10, CCDC22 and CCDC93; within the complex forms a heterodimer with COMMD6. Interacts with VPS35L; the interaction associates the CCC complex with the retriever complex. Identified in a complex with an E3 ubiquitin ligase complex composed of TCEB1/elongin C, CUL2, SOCS1 and RBX1; in the complex interacts directly with SOCS1 and CUL2. Identified in a complex with NF-kappa-B. Interacts directly with SLC12A2. Interacts directly with ATP7B (via the N-terminal region). Interacts with ATP7A. Interacts with FAM107A; this interaction stabilizes COMMD1 in the nucleus. Interacts with CCS, CDKN2A, RELA, REL, RELB, NFKB1/p105, NFKB2/p100, NFKBIB, SCNN1D, SCNN1B, CFTR, CLU, SGK1, AKT1, CUL1, CUL2, CUL3, CUL4A, CUL4B, CUL5, CUL7, HIF1A. In terms of processing, acetylated by EP300 ina stimuli-specific manner; protecting it from XIAP-mediated proteasomal degradation and required for interaction with RElA in response to stress. Post-translationally, ubiquitinated; undergoes both 'Lys-63'- and 'Lys-48'-linked polyubiquitination. Ubiquitinated by XIAP, leading to its proteasomal degradation. In terms of tissue distribution, ubiquitous. Highest expression in the liver, with lower expression in brain, lung, placenta, pancreas, small intestine, heart, skeletal muscle, kidney and placenta. Down-regulated in cancer tissues.

The protein localises to the nucleus. It localises to the cytoplasm. It is found in the endosome membrane. The protein resides in the cytoplasmic vesicle. Its subcellular location is the early endosome. The protein localises to the recycling endosome. Scaffold protein in the commander complex that is essential for endosomal recycling of transmembrane cargos; the commander complex is composed of the CCC subcomplex and the retriever subcomplex. Can modulate activity of cullin-RING E3 ubiquitin ligase (CRL) complexes by displacing CAND1; in vitro promotes CRL E3 activity and dissociates CAND1 from CUL1 and CUL2. Promotes ubiquitination of NF-kappa-B subunit RELA and its subsequent proteasomal degradation. Down-regulates NF-kappa-B activity. Involved in the regulation of membrane expression and ubiquitination of SLC12A2. Modulates Na(+) transport in epithelial cells by regulation of apical cell surface expression of amiloride-sensitive sodium channel (ENaC) subunits and by promoting their ubiquitination presumably involving NEDD4L. Promotes the localization of SCNN1D to recycling endosomes. Promotes CFTR cell surface expression through regulation of its ubiquitination. Down-regulates SOD1 activity by interfering with its homodimerization. Plays a role in copper ion homeostasis. Involved in copper-dependent ATP7A trafficking between the trans-Golgi network and vesicles in the cell periphery; the function is proposed to depend on its association within the CCC complex and cooperation with the WASH complex on early endosomes. Can bind one copper ion per monomer. May function to facilitate biliary copper excretion within hepatocytes. Binds to phosphatidylinositol 4,5-bisphosphate (PtdIns(4,5)P2). Involved in the regulation of HIF1A-mediated transcription; competes with ARNT/Hif-1-beta for binding to HIF1A resulting in decreased DNA binding and impaired transcriptional activation by HIF-1. Negatively regulates neuroblastoma G1/S phase cell cycle progression and cell proliferation by stimulating ubiquitination of NF-kappa-B subunit RELA and NF-kappa-B degradation in a FAM107A- and actin-dependent manner. This is COMM domain-containing protein 1 (COMMD1) from Homo sapiens (Human).